The primary structure comprises 132 residues: UPF0299 membrane protein YohJ (132 aa).

4 helical membrane-spanning segments follow: residues 7–27 (IIWQ…AGIF), 31–51 (LLPV…VLLA), 63–83 (GCYV…VGVM), and 93–113 (FGPV…VVSW).

This sequence belongs to the UPF0299 family.

It localises to the cell inner membrane. The chain is UPF0299 membrane protein YohJ from Shigella boydii serotype 4 (strain Sb227).